A 465-amino-acid chain; its full sequence is Probable tRNA modification GTPase MnmE (465 aa).

(6S)-5-formyl-5,6,7,8-tetrahydrofolate contacts are provided by Arg-23, Glu-85, and Arg-124. The TrmE-type G domain maps to 221–384 (GTKVCIIGKP…LNNCILDLSS (164 aa)). Residues 231 to 236 (NVGKSS), 250 to 256 (TNFPGTT), and 275 to 278 (DTAG) contribute to the GTP site. 2 residues coordinate Mg(2+): Ser-235 and Thr-256. (6S)-5-formyl-5,6,7,8-tetrahydrofolate is bound at residue Lys-465.

This sequence belongs to the TRAFAC class TrmE-Era-EngA-EngB-Septin-like GTPase superfamily. TrmE GTPase family. The cofactor is K(+).

It is found in the plastid. Its subcellular location is the chloroplast. Its function is as follows. Exhibits a very high intrinsic GTPase hydrolysis rate. Involved in the addition of a carboxymethylaminomethyl (cmnm) group at the wobble position (U34) of certain tRNAs, forming tRNA-cmnm(5)s(2)U34. This chain is Probable tRNA modification GTPase MnmE, found in Cyanidium caldarium (Red alga).